Here is a 117-residue protein sequence, read N- to C-terminus: DNA-directed RNA polymerase II subunit RPB11 (117 aa).

N-acetylmethionine is present on Met-1.

The protein belongs to the archaeal Rpo11/eukaryotic RPB11/RPC19 RNA polymerase subunit family. As to quaternary structure, component of the RNA polymerase II (Pol II) core complex consisting of 12 subunits: a ten-subunit catalytic core composed of POLR2A/RPB1, POLR2B/RPB2, POLR2C/RPB3, POLR2I/RPB9, POLR2J/RPB11, POLR2E/RPABC1, POLR2F/RPABC2, POLR2H/RPABC3, POLR2K/RPABC4 and POLR2L/RPABC5 and a mobile stalk composed of two subunits POLR2D/RPB4 and POLR2G/RPB7, protruding from the core and functioning primarily in transcription initiation. Part of Pol II(G) complex, in which Pol II core associates with an additional subunit POLR2M; unlike conventional Pol II, Pol II(G) functions as a transcriptional repressor. Part of TBP-based Pol II pre-initiation complex (PIC), in which Pol II core assembles with general transcription factors and other specific initiation factors including GTF2E1, GTF2E2, GTF2F1, GTF2F2, TCEA1, ERCC2, ERCC3, GTF2H2, GTF2H3, GTF2H4, GTF2H5, GTF2A1, GTF2A2, GTF2B and TBP; this large multi-subunit PIC complex mediates DNA unwinding and targets Pol II core to the transcription start site where the first phosphodiester bond forms. Interacts with AATF. Interacts with PTPN6; this interaction promotes the recruitment of RNA pol II to the PCK1 promoter.

It is found in the nucleus. In terms of biological role, core component of RNA polymerase II (Pol II), a DNA-dependent RNA polymerase which synthesizes mRNA precursors and many functional non-coding RNAs using the four ribonucleoside triphosphates as substrates. In Mus musculus (Mouse), this protein is DNA-directed RNA polymerase II subunit RPB11 (Polr2j).